The following is a 332-amino-acid chain: Aquaporin Lacbi1:317173 (332 aa).

A compositionally biased stretch (polar residues) spans 1-20 (MSGQHQITEQSSRNPLSRVS). Positions 1–45 (MSGQHQITEQSSRNPLSRVSTLLPEKPLSPTSTYAGTQKHPEAPR) are disordered. Residues 1–66 (MSGQHQITEQ…RNAIRKPMAE (66 aa)) lie on the Cytoplasmic side of the membrane. The helical transmembrane segment at 67-87 (FFGVALLIIFGAGSACQVVLS) threads the bilayer. Residues 88 to 100 (TNPDVASSARGSF) lie on the Extracellular side of the membrane. Residues 101-121 (LSINFGWAIGIAMGVWVSGGI) traverse the membrane as a helical segment. The Cytoplasmic portion of the chain corresponds to 122 to 144 (SGGHINPAITIAMATYRGFPWRK). An NPA 1 motif is present at residues 127-129 (NPA). The chain crosses the membrane as a helical span at residues 145–165 (VPSYILAQVLGGVVGAGLVYA). Residues 166–199 (NYIHAIDIFEGGHHIRTQATASLFATYALPYMTQ) are Extracellular-facing. The helical transmembrane segment at 200 to 220 (ASCFFSEFLATAVLSMMVFAL) threads the bilayer. At 221 to 230 (TDKRNHSPTN) the chain is on the cytoplasmic side. Residues 231-251 (GLLPFALFILFVGLGASLGME) traverse the membrane as a helical segment. Over 252–283 (TAYALNPARDFGPRLFLAMAGYGKALFNYRSQ) the chain is Extracellular. The NPA 2 motif lies at 257-259 (NPA). Residues 284 to 304 (YWLWAPIIAPVLGAQAGGLLY) traverse the membrane as a helical segment. At 305–332 (DTFLNDGDNSPIKWRCASSQEHQLAEVV) the chain is on the cytoplasmic side.

This sequence belongs to the MIP/aquaporin (TC 1.A.8) family.

It is found in the membrane. The enzyme catalyses H2O(in) = H2O(out). The catalysed reaction is NH4(+)(in) = NH4(+)(out). Functionally, water channel required to facilitate the transport of water across membranes. Acts as the most efficient Laccaria water channel. In addition to water, also shows strong ammonium transport activity. May be involved in fungal nitrogen (ammonium) support of the plant host in symbiosis. This chain is Aquaporin Lacbi1:317173, found in Laccaria bicolor (strain S238N-H82 / ATCC MYA-4686) (Bicoloured deceiver).